Reading from the N-terminus, the 555-residue chain is Cytochrome P450 78A11 (555 aa).

The chain crosses the membrane as a helical span at residues 12 to 32; it reads VDATWWAYALPALLGADTLCA. Residue C495 participates in heme binding.

The protein belongs to the cytochrome P450 family. Requires heme as cofactor. As to expression, expressed in seedlings, shoot apices and young panicles, but not in mature leaves, calli and roots.

The protein localises to the membrane. Its function is as follows. Involved in the regular timing (plastochron) of lateral organs formation. May regulate the rate of leaf initiation and the duration of vegetative phase. Seems to be redundant to the function of PLASTOCHRON2, but to act in an independent pathway. The sequence is that of Cytochrome P450 78A11 (CYP78A11) from Oryza sativa subsp. japonica (Rice).